The primary structure comprises 251 residues: Ubiquinone/menaquinone biosynthesis C-methyltransferase UbiE (251 aa).

S-adenosyl-L-methionine contacts are provided by residues Thr-74, Asp-95, and 123–124; that span reads NA.

The protein belongs to the class I-like SAM-binding methyltransferase superfamily. MenG/UbiE family.

It catalyses the reaction a 2-demethylmenaquinol + S-adenosyl-L-methionine = a menaquinol + S-adenosyl-L-homocysteine + H(+). The catalysed reaction is a 2-methoxy-6-(all-trans-polyprenyl)benzene-1,4-diol + S-adenosyl-L-methionine = a 5-methoxy-2-methyl-3-(all-trans-polyprenyl)benzene-1,4-diol + S-adenosyl-L-homocysteine + H(+). The protein operates within quinol/quinone metabolism; menaquinone biosynthesis; menaquinol from 1,4-dihydroxy-2-naphthoate: step 2/2. Its pathway is cofactor biosynthesis; ubiquinone biosynthesis. Its function is as follows. Methyltransferase required for the conversion of demethylmenaquinol (DMKH2) to menaquinol (MKH2) and the conversion of 2-polyprenyl-6-methoxy-1,4-benzoquinol (DDMQH2) to 2-polyprenyl-3-methyl-6-methoxy-1,4-benzoquinol (DMQH2). The sequence is that of Ubiquinone/menaquinone biosynthesis C-methyltransferase UbiE from Shewanella baltica (strain OS223).